The following is a 386-amino-acid chain: Chaperone protein DnaJ (386 aa).

Residues 3–68 (DYYEILEVAR…KKRQVYDRYG (66 aa)) form the J domain. A CR-type zinc finger spans residues 146–224 (GVDKELVISN…CKGQGAVKEK (79 aa)). The Zn(2+) site is built by C159, C162, C176, C179, C198, C201, C212, and C215. 4 CXXCXGXG motif repeats span residues 159–166 (CNVCNGKG), 176–183 (CSECKGRG), 198–205 (CPKCHGEG), and 212–219 (CKNCKGQG).

This sequence belongs to the DnaJ family. As to quaternary structure, homodimer. Requires Zn(2+) as cofactor.

The protein resides in the cytoplasm. In terms of biological role, participates actively in the response to hyperosmotic and heat shock by preventing the aggregation of stress-denatured proteins and by disaggregating proteins, also in an autonomous, DnaK-independent fashion. Unfolded proteins bind initially to DnaJ; upon interaction with the DnaJ-bound protein, DnaK hydrolyzes its bound ATP, resulting in the formation of a stable complex. GrpE releases ADP from DnaK; ATP binding to DnaK triggers the release of the substrate protein, thus completing the reaction cycle. Several rounds of ATP-dependent interactions between DnaJ, DnaK and GrpE are required for fully efficient folding. Also involved, together with DnaK and GrpE, in the DNA replication of plasmids through activation of initiation proteins. This Protochlamydia amoebophila (strain UWE25) protein is Chaperone protein DnaJ.